The primary structure comprises 128 residues: Glycine cleavage system H protein (128 aa).

The Lipoyl-binding domain maps to 23-105; the sequence is KVRIGITDFA…YEKAWMIVVE (83 aa). Lysine 64 carries the post-translational modification N6-lipoyllysine.

Belongs to the GcvH family. In terms of assembly, the glycine cleavage system is composed of four proteins: P, T, L and H. It depends on (R)-lipoate as a cofactor.

In terms of biological role, the glycine cleavage system catalyzes the degradation of glycine. The H protein shuttles the methylamine group of glycine from the P protein to the T protein. Functionally, is also involved in protein lipoylation via its role as an octanoyl/lipoyl carrier protein intermediate. This Halalkalibacterium halodurans (strain ATCC BAA-125 / DSM 18197 / FERM 7344 / JCM 9153 / C-125) (Bacillus halodurans) protein is Glycine cleavage system H protein.